The primary structure comprises 419 residues: Fusaric acid cluster transcription factor FUB10 (419 aa).

Positions 16 to 47 (CDRCRAQKLRCHRDSGHSTDACLRCLKSGIEC) form a DNA-binding region, zn(2)-C6 fungal-type. A disordered region spans residues 50 to 92 (SKARPTGRPPSRQVQPTVVVEQGDTSSSSHTTDSSPSAGGTDM). A compositionally biased stretch (low complexity) spans 74 to 86 (TSSSSHTTDSSPS).

It is found in the nucleus. Its function is as follows. Transcription factor that regulates the expression of the gene cluster that mediates the biosynthesis of fusaric acid, a mycotoxin with low to moderate toxicity to animals and humans, but with high phytotoxic properties. The protein is Fusaric acid cluster transcription factor FUB10 of Gibberella fujikuroi (strain CBS 195.34 / IMI 58289 / NRRL A-6831) (Bakanae and foot rot disease fungus).